Reading from the N-terminus, the 339-residue chain is Peroxidase 29 (339 aa).

Positions 1–28 (MKPKSKVAESTAASCFLVMSLLCSCIIG) are cleaved as a signal peptide. Intrachain disulfides connect cysteine 47-cysteine 127, cysteine 80-cysteine 85, cysteine 133-cysteine 335, and cysteine 213-cysteine 242. Residue histidine 78 is the Proton acceptor of the active site. Residues aspartate 79, valine 82, glycine 84, aspartate 86, and serine 88 each contribute to the Ca(2+) site. Proline 176 lines the substrate pocket. Histidine 206 contributes to the heme b binding site. Threonine 207 serves as a coordination point for Ca(2+). N-linked (GlcNAc...) asparagine glycosylation occurs at asparagine 224. Ca(2+) is bound by residues aspartate 260, threonine 262, and aspartate 267.

Belongs to the peroxidase family. Classical plant (class III) peroxidase subfamily. The cofactor is heme b. Ca(2+) is required as a cofactor.

The protein resides in the secreted. It catalyses the reaction 2 a phenolic donor + H2O2 = 2 a phenolic radical donor + 2 H2O. Functionally, removal of H(2)O(2), oxidation of toxic reductants, biosynthesis and degradation of lignin, suberization, auxin catabolism, response to environmental stresses such as wounding, pathogen attack and oxidative stress. These functions might be dependent on each isozyme/isoform in each plant tissue. The chain is Peroxidase 29 (PER29) from Arabidopsis thaliana (Mouse-ear cress).